The chain runs to 1217 residues: Sterol 3-beta-glucosyltransferase (1217 aa).

One can recognise a GRAM 1 domain in the interval 195-232 (EFVRKYFGISEEETLIGHYTGWLLQEVLIQGNLFITNS). A PH domain is found at 246–343 (AVVLCGKLKL…WVKCLKKQLF (98 aa)). Positions 590–656 (AKIKDWFNLH…EDIEGYNEIL (67 aa)) constitute a GRAM 2 domain. Positions 766, 767, 769, 1042, 1072, 1074, 1087, 1090, 1091, 1092, 1111, and 1112 each coordinate UDP-alpha-D-glucose.

The protein belongs to the glycosyltransferase 28 family.

The protein resides in the cytoplasm. Its subcellular location is the membrane. The catalysed reaction is a sterol + UDP-alpha-D-glucose = a sterol 3-beta-D-glucoside + UDP + H(+). It carries out the reaction ergosterol + UDP-alpha-D-glucose = ergosteryl 3-beta-D-glucoside + UDP + H(+). Sterol glycosyltransferase responsible for the glycosylation of ergosterol to form ergosterol-glucoside. The sequence is that of Sterol 3-beta-glucosyltransferase from Vanderwaltozyma polyspora (strain ATCC 22028 / DSM 70294 / BCRC 21397 / CBS 2163 / NBRC 10782 / NRRL Y-8283 / UCD 57-17) (Kluyveromyces polysporus).